A 71-amino-acid polypeptide reads, in one-letter code: Large ribosomal subunit protein bL31 (71 aa).

Zn(2+) is bound by residues cysteine 16, cysteine 18, cysteine 37, and cysteine 40.

It belongs to the bacterial ribosomal protein bL31 family. Type A subfamily. As to quaternary structure, part of the 50S ribosomal subunit. It depends on Zn(2+) as a cofactor.

In terms of biological role, binds the 23S rRNA. In Pectobacterium atrosepticum (strain SCRI 1043 / ATCC BAA-672) (Erwinia carotovora subsp. atroseptica), this protein is Large ribosomal subunit protein bL31.